Here is a 353-residue protein sequence, read N- to C-terminus: Photosystem II D2 protein (353 aa).

Residue Thr2 is modified to N-acetylthreonine. At Thr2 the chain carries Phosphothreonine. A helical membrane pass occupies residues 41-61 (CAYFALGGWFTGTTFVTSWYT). His118 is a binding site for chlorophyll a. The chain crosses the membrane as a helical span at residues 125-141 (GFMLRQFELARSVQLRP). Residues Gln130 and Asn143 each coordinate pheophytin a. Residues 153–166 (VFVSVFFIYPLGQS) traverse the membrane as a helical segment. Chlorophyll a is bound at residue His198. Residues 208 to 228 (AALLCAIHGATVENTLFEDGD) traverse the membrane as a helical segment. The a plastoquinone site is built by His215 and Phe262. His215 contacts Fe cation. His269 contributes to the Fe cation binding site. The chain crosses the membrane as a helical span at residues 279-295 (GLWMSALGVVGLALNLR).

It belongs to the reaction center PufL/M/PsbA/D family. As to quaternary structure, PSII is composed of 1 copy each of membrane proteins PsbA, PsbB, PsbC, PsbD, PsbE, PsbF, PsbH, PsbI, PsbJ, PsbK, PsbL, PsbM, PsbT, PsbX, PsbY, PsbZ, Psb30/Ycf12, at least 3 peripheral proteins of the oxygen-evolving complex and a large number of cofactors. It forms dimeric complexes. The D1/D2 heterodimer binds P680, chlorophylls that are the primary electron donor of PSII, and subsequent electron acceptors. It shares a non-heme iron and each subunit binds pheophytin, quinone, additional chlorophylls, carotenoids and lipids. There is also a Cl(-1) ion associated with D1 and D2, which is required for oxygen evolution. The PSII complex binds additional chlorophylls, carotenoids and specific lipids. serves as cofactor.

The protein localises to the plastid membrane. The enzyme catalyses 2 a plastoquinone + 4 hnu + 2 H2O = 2 a plastoquinol + O2. In terms of biological role, photosystem II (PSII) is a light-driven water:plastoquinone oxidoreductase that uses light energy to abstract electrons from H(2)O, generating O(2) and a proton gradient subsequently used for ATP formation. It consists of a core antenna complex that captures photons, and an electron transfer chain that converts photonic excitation into a charge separation. The D1/D2 (PsbA/PsbD) reaction center heterodimer binds P680, the primary electron donor of PSII as well as several subsequent electron acceptors. D2 is needed for assembly of a stable PSII complex. This is Photosystem II D2 protein from Cuscuta exaltata (Tall dodder).